The primary structure comprises 617 residues: Vacuolar protein sorting-associated protein 33B (617 aa).

The residue at position 2 (alanine 2) is an N-acetylalanine.

Belongs to the STXBP/unc-18/SEC1 family. As to quaternary structure, interacts with RAB11A and VIPAS39. Interacts with RAB25. Associates with adapter protein complex 3 (AP-3), clathrin:AP-3 and clathrin:HGS complexes. In terms of assembly, (Microbial infection) Interacts with M.tuberculosis PtpA. In terms of processing, phosphorylated on tyrosine residues. Post-translationally, (Microbial infection) Dephosphorylated by M.tuberculosis PtpA, which induces the reduction of host phagolysosome fusion in M.tuberculosis-infected macrophages. Ubiquitous; highly expressed in testis and low expression in the lung.

It localises to the late endosome membrane. Its subcellular location is the lysosome membrane. The protein resides in the early endosome. The protein localises to the cytoplasmic vesicle. It is found in the clathrin-coated vesicle. It localises to the recycling endosome. Its function is as follows. May play a role in vesicle-mediated protein trafficking to lysosomal compartments and in membrane docking/fusion reactions of late endosomes/lysosomes. Required for proper trafficking and targeting of the collagen-modifying enzyme lysyl hydroxylase 3 (LH3) to intracellular collagen. Mediates phagolysosomal fusion in macrophages. Proposed to be involved in endosomal maturation implicating VIPAS39. In epithelial cells, the VPS33B:VIPAS39 complex may play a role in the apical recycling pathway and in the maintenance of the apical-basolateral polarity. Seems to be involved in the sorting of specific cargos from the trans-Golgi network to alpha-granule-destined multivesicular bodies (MVBs) promoting MVBs maturation in megakaryocytes. This is Vacuolar protein sorting-associated protein 33B (VPS33B) from Homo sapiens (Human).